The sequence spans 498 residues: ATP synthase subunit beta, chloroplastic (498 aa).

172 to 179 is an ATP binding site; the sequence is GGAGVGKT.

The protein belongs to the ATPase alpha/beta chains family. In terms of assembly, F-type ATPases have 2 components, CF(1) - the catalytic core - and CF(0) - the membrane proton channel. CF(1) has five subunits: alpha(3), beta(3), gamma(1), delta(1), epsilon(1). CF(0) has four main subunits: a(1), b(1), b'(1) and c(9-12).

The protein resides in the plastid. It localises to the chloroplast thylakoid membrane. The enzyme catalyses ATP + H2O + 4 H(+)(in) = ADP + phosphate + 5 H(+)(out). Functionally, produces ATP from ADP in the presence of a proton gradient across the membrane. The catalytic sites are hosted primarily by the beta subunits. This is ATP synthase subunit beta, chloroplastic from Phoenix dactylifera (Date palm).